The sequence spans 135 residues: Probable histone H2A.2 (135 aa).

This sequence belongs to the histone H2A family. The nucleosome is a histone octamer containing two molecules each of H2A, H2B, H3 and H4 assembled in one H3-H4 heterotetramer and two H2A-H2B heterodimers. The octamer wraps approximately 147 bp of DNA.

The protein localises to the nucleus. It is found in the chromosome. Core component of nucleosome. Nucleosomes wrap and compact DNA into chromatin, limiting DNA accessibility to the cellular machineries which require DNA as a template. Histones thereby play a central role in transcription regulation, DNA repair, DNA replication and chromosomal stability. DNA accessibility is regulated via a complex set of post-translational modifications of histones, also called histone code, and nucleosome remodeling. The polypeptide is Probable histone H2A.2 (Oryza sativa subsp. indica (Rice)).